A 288-amino-acid polypeptide reads, in one-letter code: Hypersensitive-induced response protein-like protein 1 (288 aa).

Gly2 carries the N-myristoyl glycine lipid modification.

Its function is as follows. Positive regulator of hypersensitive response (HR)-like cell death. May be involved in potassium ion channel regulation. The protein is Hypersensitive-induced response protein-like protein 1 of Oryza sativa subsp. japonica (Rice).